The chain runs to 261 residues: MRKNNMQTSKDSELKEQAKGKSSKLIHKLPKQRTRISQGQMHSTQDFVNNEDQDAYSVRENENELHINNSGMSELNKKLQLPNVELSTLSHTQEQEFNELNKLIRKINELQEFYLLEDLAKPVTNAGADADDTIVKDLKKELENEKKANHSLKNELLKTREQIKNYSKINILIKELFGLEVADCIEDEDGYRFNCKNTGRRGTLEYQLLLDDQNFTFTPRLNVQTDEELMKHLPDYLLEEIIFTKEQGKLFSARLMKALQD.

A disordered region spans residues 1–42; it reads MRKNNMQTSKDSELKEQAKGKSSKLIHKLPKQRTRISQGQMH. Positions 10 to 19 are enriched in basic and acidic residues; it reads KDSELKEQAK. Residues 21–34 show a composition bias toward basic residues; that stretch reads KSSKLIHKLPKQRT. Residues 91-170 are a coiled coil; sequence HTQEQEFNEL…EQIKNYSKIN (80 aa).

In terms of assembly, component of a monopolin-like complex composed of pcs1 and mde4. The complex associates with the kinetochore.

The protein localises to the nucleus. It localises to the nucleolus. Its subcellular location is the chromosome. The protein resides in the centromere. Functionally, the monopolin-like pcs1/mde4 complex is essential for accurate chromosome segregation during mitosis and meiosis II. May clamp together microtubule binding sites on the same kinetochore, preventing merotelic attachment of microtubules. In contrast to its S.cerevisiae ortholog CSM1, is not required ofr mono-orientation during meiosis I. The polypeptide is Monopolin complex subunit pcs1 (pcs1) (Schizosaccharomyces pombe (strain 972 / ATCC 24843) (Fission yeast)).